A 666-amino-acid chain; its full sequence is E3 ubiquitin-protein ligase MBR2 (666 aa).

Composition is skewed to polar residues over residues 1 to 14 (MQGP…STGI), 23 to 35 (CSTN…NNIL), 42 to 58 (FPNN…ASSS), and 73 to 88 (SSSR…SNGS). Disordered stretches follow at residues 1–58 (MQGP…ASSS), 73–95 (SSSR…RQLL), 155–179 (SLGS…GLGS), 221–329 (SSLS…DGQP), 400–433 (NPST…TPHN), and 457–491 (GASL…RQRR). Over residues 221–239 (SSLSLSMPSQNSPNVNNQS) the composition is skewed to low complexity. Polar residues-rich tracts occupy residues 258–268 (AFPSTRSTETI), 286–303 (FSFT…QLPA), and 414–433 (GSSS…TPHN). Residues 619-660 (CCVCQEEYAEGDDLGTLGCGHEFHTACVKQWLMLKNLCPICK) form an RING-type; atypical zinc finger.

The protein belongs to the RING-type zinc finger family. In terms of assembly, interacts with MED25 and UBC11.

It catalyses the reaction S-ubiquitinyl-[E2 ubiquitin-conjugating enzyme]-L-cysteine + [acceptor protein]-L-lysine = [E2 ubiquitin-conjugating enzyme]-L-cysteine + N(6)-ubiquitinyl-[acceptor protein]-L-lysine.. It functions in the pathway protein modification; protein ubiquitination. Its function is as follows. E3 ubiquitin-protein ligase that functions as a regulator of MED25 stability by targeting MED25 for degradation in a RING-H2-dependent way. Proteasome-dependent degradation of MED25 seems to activate its function as positive regulator of FLOWERING LOCUS T (FT) and is important to induce the expression of FT and consequently to promote flowering. May function downstream of HAL3 and be required for HAL3-regulated plant growth. Activation of MBR2 by HAL3 may lead to the degradation of cell cycle suppressors, resulting in enhancement of cell division and plant growth. In Arabidopsis thaliana (Mouse-ear cress), this protein is E3 ubiquitin-protein ligase MBR2 (MBR2).